Consider the following 143-residue polypeptide: Small ribosomal subunit protein uS9 (143 aa).

Residues 123–143 (RPEPKKFGGRGARARFQKSYR) form a disordered region. Residues 134 to 143 (ARARFQKSYR) are compositionally biased toward basic residues.

The protein belongs to the universal ribosomal protein uS9 family.

This Eremothecium gossypii (strain ATCC 10895 / CBS 109.51 / FGSC 9923 / NRRL Y-1056) (Yeast) protein is Small ribosomal subunit protein uS9 (RPS16).